Reading from the N-terminus, the 330-residue chain is Ribosomal RNA small subunit methyltransferase H (330 aa).

S-adenosyl-L-methionine-binding positions include 35 to 37, Asp53, Phe80, Asp101, and Gln108; that span reads GGY.

Belongs to the methyltransferase superfamily. RsmH family.

The protein resides in the cytoplasm. The catalysed reaction is cytidine(1402) in 16S rRNA + S-adenosyl-L-methionine = N(4)-methylcytidine(1402) in 16S rRNA + S-adenosyl-L-homocysteine + H(+). Specifically methylates the N4 position of cytidine in position 1402 (C1402) of 16S rRNA. The sequence is that of Ribosomal RNA small subunit methyltransferase H from Rhodopseudomonas palustris (strain BisB18).